Reading from the N-terminus, the 542-residue chain is GMP synthase [glutamine-hydrolyzing] (542 aa).

The Glutamine amidotransferase type-1 domain occupies 28–218 (MLVILDFGSQ…VYHICQCEPT (191 aa)). C105 serves as the catalytic Nucleophile. Catalysis depends on residues H192 and E194. The GMPS ATP-PPase domain maps to 219-417 (WTTEAFVEES…IGLPEEIVRR (199 aa)). 246-252 (SGGVDSS) is a binding site for ATP.

In terms of assembly, homodimer.

It catalyses the reaction XMP + L-glutamine + ATP + H2O = GMP + L-glutamate + AMP + diphosphate + 2 H(+). It participates in purine metabolism; GMP biosynthesis; GMP from XMP (L-Gln route): step 1/1. Its function is as follows. Catalyzes the synthesis of GMP from XMP. The chain is GMP synthase [glutamine-hydrolyzing] from Rippkaea orientalis (strain PCC 8801 / RF-1) (Cyanothece sp. (strain PCC 8801)).